We begin with the raw amino-acid sequence, 444 residues long: MKGVENTLSQSESVNRGYNGWMGMESETSARATHSSEQMISLEEYVREMLPMHLQKLLMERIIEAEQTGAAHTSVFAAPTGVAAQYPAMGPPMLPGQTFSSRSFAEGLVVGQLSVIVVLIFFIKFFIFSDGPAKTGGGGGSSAESRSSGFTGSPLTSTTSRLLSTLIKRGGKEGTEFAEDSENERTRQINAILEKTYYDVETHSPESLDWFNVLIAQTIQKFREEALQKDNIVHSLNDFISRKSSQLPNYLDAVKITELDIGDDFPIFSNCRIKYSPPLNKKRLEAKIDIDLSDRLTLGIETRLLMNYPKYLTASLPVKLTVSMLRFQACLTVSLTTAEEFVPTMAATTDTDAGDSEGHYLVFSFSPDYRMEFDIKSLIGARSKLENIPKISSLVEYQIKKWFMDRCVEPRFQFVKLPSMWPRSKNTREEKSDMQEEDPSRAPE.

The segment covering 1–16 (MKGVENTLSQSESVNR) has biased composition (polar residues). Residues 1 to 20 (MKGVENTLSQSESVNRGYNG) are disordered. Topologically, residues 1 to 107 (MKGVENTLSQ…TFSSRSFAEG (107 aa)) are lumenal. The chain crosses the membrane as a helical span at residues 108 to 128 (LVVGQLSVIVVLIFFIKFFIF). The Cytoplasmic portion of the chain corresponds to 129-444 (SDGPAKTGGG…QEEDPSRAPE (316 aa)). Residues 136 to 157 (GGGGGSSAESRSSGFTGSPLTS) form a disordered region. Low complexity predominate over residues 142–157 (SAESRSSGFTGSPLTS). Residues 204–418 (SPESLDWFNV…EPRFQFVKLP (215 aa)) form the SMP-LTD domain. Residues 425 to 444 (KNTREEKSDMQEEDPSRAPE) form a disordered region. Basic and acidic residues predominate over residues 426 to 444 (NTREEKSDMQEEDPSRAPE).

Belongs to the MMM1 family. Homodimer. Component of the ER-mitochondria encounter structure (ERMES) or MDM complex, composed of MMM1, MDM10, MDM12 and MDM34. An MMM1 homodimer associates with one molecule of MDM12 on each side in a pairwise head-to-tail manner, and the SMP-LTD domains of MMM1 and MDM12 generate a continuous hydrophobic tunnel for phospholipid trafficking.

Its subcellular location is the endoplasmic reticulum membrane. In terms of biological role, component of the ERMES/MDM complex, which serves as a molecular tether to connect the endoplasmic reticulum (ER) and mitochondria. Components of this complex are involved in the control of mitochondrial shape and protein biogenesis, and function in nonvesicular lipid trafficking between the ER and mitochondria. The MDM12-MMM1 subcomplex functions in the major beta-barrel assembly pathway that is responsible for biogenesis of all outer membrane beta-barrel proteins, and acts in a late step after the SAM complex. The MDM10-MDM12-MMM1 subcomplex further acts in the TOM40-specific pathway after the action of the MDM12-MMM1 complex. Essential for establishing and maintaining the structure of mitochondria and maintenance of mtDNA nucleoids. The chain is Maintenance of mitochondrial morphology protein 1 from Eremothecium gossypii (strain ATCC 10895 / CBS 109.51 / FGSC 9923 / NRRL Y-1056) (Yeast).